We begin with the raw amino-acid sequence, 251 residues long: MSAKPQPIAAANWKCNGTTASIEKLVQVFNEHTISHDVQCVVAPTFVHIPLVQAKLRNPKYVISAENAIAKSGAFTGEVSMPILKDIGVHWVILGHSERRTYYGETDEIVAQKVSEACKQGFMVIACIGETLQQREANQTAKVVLSQTSAIAAKLTKDAWNQVVLAYEPVWAIGTGKVATPEQAQEVHLLLRKWVSENIGTDVAAKLRILYGGSVNAANAATLYAKPDINGFLVGGASLKPEFRDIIDATR.

The substrate site is built by N12 and K14. H96 (electrophile) is an active-site residue. E168 (proton acceptor) is an active-site residue.

The protein belongs to the triosephosphate isomerase family. In terms of assembly, homodimer.

It localises to the cytoplasm. The protein resides in the glycosome. The catalysed reaction is D-glyceraldehyde 3-phosphate = dihydroxyacetone phosphate. It functions in the pathway carbohydrate biosynthesis; gluconeogenesis. It participates in carbohydrate degradation; glycolysis; D-glyceraldehyde 3-phosphate from glycerone phosphate: step 1/1. This is Triosephosphate isomerase from Leishmania mexicana.